Here is a 184-residue protein sequence, read N- to C-terminus: NADH-quinone oxidoreductase subunit B (184 aa).

[4Fe-4S] cluster contacts are provided by Cys-37, Cys-38, Cys-103, and Cys-132.

The protein belongs to the complex I 20 kDa subunit family. In terms of assembly, NDH-1 is composed of 14 different subunits. Subunits NuoB, C, D, E, F, and G constitute the peripheral sector of the complex. The cofactor is [4Fe-4S] cluster.

It localises to the cell membrane. The enzyme catalyses a quinone + NADH + 5 H(+)(in) = a quinol + NAD(+) + 4 H(+)(out). NDH-1 shuttles electrons from NADH, via FMN and iron-sulfur (Fe-S) centers, to quinones in the respiratory chain. The immediate electron acceptor for the enzyme in this species is believed to be a menaquinone. Couples the redox reaction to proton translocation (for every two electrons transferred, four hydrogen ions are translocated across the cytoplasmic membrane), and thus conserves the redox energy in a proton gradient. This Mycolicibacterium vanbaalenii (strain DSM 7251 / JCM 13017 / BCRC 16820 / KCTC 9966 / NRRL B-24157 / PYR-1) (Mycobacterium vanbaalenii) protein is NADH-quinone oxidoreductase subunit B.